A 291-amino-acid chain; its full sequence is NAD kinase (291 aa).

Residue Asp-55 is the Proton acceptor of the active site. Residues 55 to 56 (DG), Arg-60, 130 to 131 (NE), Asp-160, and 171 to 176 (TAYAFS) contribute to the NAD(+) site.

It belongs to the NAD kinase family. Requires a divalent metal cation as cofactor.

The protein resides in the cytoplasm. The catalysed reaction is NAD(+) + ATP = ADP + NADP(+) + H(+). In terms of biological role, involved in the regulation of the intracellular balance of NAD and NADP, and is a key enzyme in the biosynthesis of NADP. Catalyzes specifically the phosphorylation on 2'-hydroxyl of the adenosine moiety of NAD to yield NADP. The protein is NAD kinase of Corynebacterium glutamicum (strain ATCC 13032 / DSM 20300 / JCM 1318 / BCRC 11384 / CCUG 27702 / LMG 3730 / NBRC 12168 / NCIMB 10025 / NRRL B-2784 / 534).